We begin with the raw amino-acid sequence, 81 residues long: CLAVATA3/ESR (CLE)-related protein 12 (81 aa).

The first 31 residues, 1–31 (MENSNKVPISKIGLIMLMIFSTFFMSPHARR), serve as a signal peptide directing secretion. The segment covering 55-67 (KRSRTDLEDKAVP) has biased composition (basic and acidic residues). The segment at 55 to 81 (KRSRTDLEDKAVPGDRLSPGGPNHIHN) is disordered. Residues P73 and P76 each carry the hydroxyproline modification. Residue P76 is glycosylated (O-linked (Ara...) hydroxyproline).

It belongs to the CLV3/ESR signal peptide family. Post-translationally, the O-glycosylation (arabinosylation) of the hydroxyproline Pro-76 enhances binding affinity of the CLE12p peptide for its receptor. As to expression, expressed in young nodules throughout the central tissue. Expressed in the apical region of elongated nodules, corresponding to the meristematic and early infection zones.

It is found in the secreted. Its subcellular location is the extracellular space. Signaling peptide involved in the regulation of nodulation. Moves from root to shoot to function with the receptor kinase SUNN, in a signaling pathway that plays roles during cellular differentiation, both at the onset of nodulation, and later during nodule meristem development and subsequent homeostasis. Interacts with SUNN signaling to control nodule numbers. SUNN is involved in the autoregulation of nodulation (AON), a long distance systemic signaling from root to shoot and back again, which allows legumes to limit the number of root nodules formed based on available nitrogen and previous rhizobial colonization. The protein is CLAVATA3/ESR (CLE)-related protein 12 of Medicago truncatula (Barrel medic).